A 450-amino-acid polypeptide reads, in one-letter code: 3-phosphoshikimate 1-carboxyvinyltransferase (450 aa).

The interval Met1–Gly26 is disordered. Lys28, Ser29, and Arg33 together coordinate 3-phosphoshikimate. Residue Lys28 coordinates phosphoenolpyruvate. Phosphoenolpyruvate is bound by residues Gly101 and Arg129. Positions 174, 176, 327, and 354 each coordinate 3-phosphoshikimate. Gln176 provides a ligand contact to phosphoenolpyruvate. The Proton acceptor role is filled by Asp327. The phosphoenolpyruvate site is built by Arg358 and Arg403.

This sequence belongs to the EPSP synthase family. As to quaternary structure, monomer.

It localises to the cytoplasm. It catalyses the reaction 3-phosphoshikimate + phosphoenolpyruvate = 5-O-(1-carboxyvinyl)-3-phosphoshikimate + phosphate. The protein operates within metabolic intermediate biosynthesis; chorismate biosynthesis; chorismate from D-erythrose 4-phosphate and phosphoenolpyruvate: step 6/7. Functionally, catalyzes the transfer of the enolpyruvyl moiety of phosphoenolpyruvate (PEP) to the 5-hydroxyl of shikimate-3-phosphate (S3P) to produce enolpyruvyl shikimate-3-phosphate and inorganic phosphate. The polypeptide is 3-phosphoshikimate 1-carboxyvinyltransferase (Ruegeria sp. (strain TM1040) (Silicibacter sp.)).